Here is a 526-residue protein sequence, read N- to C-terminus: NAD(P)H-quinone oxidoreductase chain 4 1 (526 aa).

Transmembrane regions (helical) follow at residues 7 to 27 (FPWLSALVLLPLLAAFGIPLL), 35 to 55 (WYALAVGALDLGLMAYIFGWH), 86 to 106 (LSFPLVLLSGLITTLAIVAAW), 114 to 134 (LFFFLLLLMYGAQVGVFLAQD), 135 to 155 (LLLFFLMWEIELVPVYLLIAI), 168 to 188 (FILYTAAASIFILVGSLAMAF), 208 to 228 (ALQILAYAAFLIAFGVKLPVF), 242 to 262 (SAPISMILAGVLLKMGGYGLI), 276 to 296 (FAPVLAVLGAVNIVYGALAAL), 310 to 330 (IAHMGFVLIGIAAFTELGLNG), 331 to 351 (ALLQMISHGLIAAVLFFLTGI), 374 to 396 (AFALFTAGSLASLALPGMSGFVG), 417 to 437 (GIALLAAVGIILTPIYLLSML), and 463 to 483 (MAVALCLLLPILGIGLYPRLA).

Belongs to the complex I subunit 4 family.

The protein localises to the cellular thylakoid membrane. The catalysed reaction is a plastoquinone + NADH + (n+1) H(+)(in) = a plastoquinol + NAD(+) + n H(+)(out). The enzyme catalyses a plastoquinone + NADPH + (n+1) H(+)(in) = a plastoquinol + NADP(+) + n H(+)(out). In terms of biological role, NDH-1 shuttles electrons from NAD(P)H, via FMN and iron-sulfur (Fe-S) centers, to quinones in the respiratory chain. The immediate electron acceptor for the enzyme in this species is believed to be plastoquinone. Couples the redox reaction to proton translocation (for every two electrons transferred, four hydrogen ions are translocated across the cytoplasmic membrane), and thus conserves the redox energy in a proton gradient. The protein is NAD(P)H-quinone oxidoreductase chain 4 1 of Synechococcus sp. (strain JA-3-3Ab) (Cyanobacteria bacterium Yellowstone A-Prime).